We begin with the raw amino-acid sequence, 393 residues long: N-acyl-phosphatidylethanolamine-hydrolyzing phospholipase D (393 aa).

Residue Met1 is modified to N-acetylmethionine. Residues 1-16 (MDENESNQSLMTSSQY) show a composition bias toward polar residues. The interval 1–40 (MDENESNQSLMTSSQYPKEAVRKRQNSARNSGASDSSRFS) is disordered. 2 residues coordinate Zn(2+): His185 and His187. Tyr188 is a binding site for an N-acyl-1,2-diacyl-sn-glycero-3-phosphoethanolamine. The Zn(2+) site is built by Asp189, His190, and His253. Deoxycholate-binding residues include Lys256 and Met260. Asp284 contributes to the Zn(2+) binding site. His321 contacts an N-acyl-1,2-diacyl-sn-glycero-3-phosphoethanolamine. His343 lines the Zn(2+) pocket. Residue Ala348 participates in deoxycholate binding.

This sequence belongs to the NAPE-PLD family. Homodimer. Bile acids promote the assembly of inactive monomers into an active dimer and enable catalysis. Requires Zn(2+) as cofactor. In terms of tissue distribution, widely expressed. Highest expression in brain, kidney and testis (at protein level). Expressed in adipose tissue (at protein level).

It localises to the golgi apparatus membrane. The protein localises to the early endosome membrane. It is found in the nucleus envelope. Its subcellular location is the nucleus. The protein resides in the nucleoplasm. It carries out the reaction an N-acyl-1,2-diacyl-sn-glycero-3-phosphoethanolamine + H2O = an N-acylethanolamine + a 1,2-diacyl-sn-glycero-3-phosphate + H(+). The enzyme catalyses N-butanoyl-1-hexadecanoyl-2-(9Z,12Z-octadecadienoyl)-sn-glycero-3-phosphoethanolamine + H2O = N-butanoyl ethanolamine + 1-hexadecanoyl-2-(9Z,12Z-octadecadienoyl)-sn-glycero-3-phosphate + H(+). It catalyses the reaction N-hexanoyl-1-hexadecanoyl-2-(9Z,12Z-octadecadienoyl)-sn-glycero-3-phosphoethanolamine + H2O = N-hexanoyl ethanolamine + 1-hexadecanoyl-2-(9Z,12Z-octadecadienoyl)-sn-glycero-3-phosphate + H(+). The catalysed reaction is N-octanoyl-1-hexadecanoyl-2-(9Z,12Z-octadecadienoyl)-sn-glycero-3-phosphoethanolamine + H2O = N-octanoyl ethanolamine + 1-hexadecanoyl-2-(9Z,12Z-octadecadienoyl)-sn-glycero-3-phosphate + H(+). It carries out the reaction N-decanoyl-1-hexadecanoyl-2-(9Z,12Z-octadecadienoyl)-sn-glycero-3-phosphoethanolamine + H2O = N-decanoyl ethanolamine + 1-hexadecanoyl-2-(9Z,12Z-octadecadienoyl)-sn-glycero-3-phosphate + H(+). The enzyme catalyses N-dodecanoyl-1,2-di-(9Z-octadecenoyl)-sn-glycero-3-phosphoethanolamine + H2O = N-dodecanoylethanolamine + 1,2-di-(9Z-octadecenoyl)-sn-glycero-3-phosphate + H(+). It catalyses the reaction N-tetradecanoyl-1,2-di-(9Z-octadecenoyl)-sn-glycero-3-phosphoethanolamine + H2O = N-tetradecanoylethanolamine + 1,2-di-(9Z-octadecenoyl)-sn-glycero-3-phosphate + H(+). The catalysed reaction is N-hexadecanoyl-1,2-di-(9Z-octadecenoyl)-sn-glycero-3-phosphoethanolamine + H2O = N-hexadecanoylethanolamine + 1,2-di-(9Z-octadecenoyl)-sn-glycero-3-phosphate + H(+). It carries out the reaction N,1-dihexadecanoyl-2-(9Z,12Z-octadecadienoyl)-sn-glycero-3-phosphoethanolamine + H2O = 1-hexadecanoyl-2-(9Z,12Z-octadecadienoyl)-sn-glycero-3-phosphate + N-hexadecanoylethanolamine + H(+). The enzyme catalyses N-octadecanoyl-1,2-di-(9Z-octadecenoyl)-sn-glycero-3-phosphoethanolamine + H2O = N-octadecanoyl ethanolamine + 1,2-di-(9Z-octadecenoyl)-sn-glycero-3-phosphate + H(+). It catalyses the reaction N,1,2-tri-(9Z-octadecenoyl)-sn-glycero-3-phosphoethanolamine + H2O = N-(9Z-octadecenoyl) ethanolamine + 1,2-di-(9Z-octadecenoyl)-sn-glycero-3-phosphate + H(+). The catalysed reaction is N-(5Z,8Z,11Z,14Z-eicosatetraenoyl)-1,2-diacyl-sn-glycero-3-phosphoethanolamine + H2O = N-(5Z,8Z,11Z,14Z-eicosatetraenoyl)-ethanolamine + a 1,2-diacyl-sn-glycero-3-phosphate + H(+). It carries out the reaction N-(5Z,8Z,11Z,14Z-eicosatetraenoyl)-1,2-di-(9Z-octadecenoyl)-sn-glycero-3-phosphoethanolamine + H2O = N-(5Z,8Z,11Z,14Z-eicosatetraenoyl)-ethanolamine + 1,2-di-(9Z-octadecenoyl)-sn-glycero-3-phosphate + H(+). The enzyme catalyses 1-O-(1Z-octadecenoyl)-2-(9Z-octadecenoyl)-sn-glycero-3-phospho-N-hexadecanoyl-ethanolamine + H2O = 1-O-(1Z-octadecenoyl)-2-(9Z-octadecenoyl)-sn-glycero-3-phosphate + N-hexadecanoylethanolamine + H(+). It catalyses the reaction N,1-diacyl-sn-glycero-3-phosphoethanolamine + H2O = an N-acylethanolamine + a 1-acyl-sn-glycero-3-phosphate + H(+). The catalysed reaction is N,1-dihexadecanoyl-sn-glycero-3-phosphoethanolamine + H2O = N-hexadecanoylethanolamine + 1-hexadecanoyl-sn-glycero-3-phosphate + H(+). It carries out the reaction N-(5Z,8Z,11Z,14Z-eicosatetraenoyl)-1-(9Z-octadecenoyl)-sn-glycero-3-phosphoethanolamine + H2O = N-(5Z,8Z,11Z,14Z-eicosatetraenoyl)-ethanolamine + 1-(9Z-octadecenoyl)-sn-glycero-3-phosphate + H(+). With respect to regulation, activated by divalent cations. Activated by bile acids and their conjugates, except for lithocholic acid which is rather inhibitory. Binding of deoxycholic acid favors the selective release of anandamide and likely other unsatured long FAEs. Inhibited by phosphatidylethanolamines. D-type phospholipase that hydrolyzes N-acyl-phosphatidylethanolamines (NAPEs) to produce bioactive N-acylethanolamines/fatty acid ethanolamides (NAEs/FAEs) and phosphatidic acid. Cleaves the terminal phosphodiester bond of diacyl- and alkenylacyl-NAPEs, primarily playing a role in the generation of long-chain saturated and monounsaturated NAEs in the brain. May control NAPE homeostasis in dopaminergic neuron membranes and regulate neuron survival, partly through RAC1 activation. As a regulator of lipid metabolism in the adipose tissue, mediates the crosstalk between adipocytes, gut microbiota and immune cells to control body temperature and weight. In particular, regulates energy homeostasis by promoting cold-induced brown or beige adipocyte differentiation program to generate heat from fatty acids and glucose. Has limited D-type phospholipase activity toward N-acyl lyso-NAPEs. This Homo sapiens (Human) protein is N-acyl-phosphatidylethanolamine-hydrolyzing phospholipase D (NAPEPLD).